The following is a 340-amino-acid chain: Protein RecA (340 aa).

Residue glycine 66 to threonine 73 coordinates ATP.

This sequence belongs to the RecA family.

Its subcellular location is the cytoplasm. Functionally, can catalyze the hydrolysis of ATP in the presence of single-stranded DNA, the ATP-dependent uptake of single-stranded DNA by duplex DNA, and the ATP-dependent hybridization of homologous single-stranded DNAs. It interacts with LexA causing its activation and leading to its autocatalytic cleavage. In Rickettsia prowazekii (strain Madrid E), this protein is Protein RecA.